The chain runs to 554 residues: Valerianol synthase TPS1G (554 aa).

Positions 307 and 311 each coordinate Mg(2+). Residues 326-330 carry the DDXXD motif motif; that stretch reads VQRWD. Mg(2+) contacts are provided by D452, S456, and E460.

It belongs to the terpene synthase family. Mg(2+) is required as a cofactor.

The catalysed reaction is (2E,6E)-farnesyl diphosphate + H2O = valerianol + diphosphate. Its pathway is secondary metabolite biosynthesis; terpenoid biosynthesis. In terms of biological role, terpene synthase that catalyzes the biosynthesis of the terpene valerianol, which is a volatile compound of floral scent. The protein is Valerianol synthase TPS1G of Camellia hiemalis (Camellia).